We begin with the raw amino-acid sequence, 395 residues long: S-adenosylmethionine synthase (395 aa).

Position 16 (His-16) interacts with ATP. Residue Asp-18 coordinates Mg(2+). Glu-44 lines the K(+) pocket. The L-methionine site is built by Glu-57 and Gln-100. A flexible loop region spans residues 100-110 (QSPDIAQGVDD). Residues 174–176 (DAK), 241–242 (RF), Asp-250, 256–257 (RK), Ala-273, and Lys-277 contribute to the ATP site. Asp-250 is an L-methionine binding site. Position 281 (Lys-281) interacts with L-methionine.

This sequence belongs to the AdoMet synthase family. As to quaternary structure, homotetramer; dimer of dimers. It depends on Mg(2+) as a cofactor. K(+) serves as cofactor.

The protein localises to the cytoplasm. It catalyses the reaction L-methionine + ATP + H2O = S-adenosyl-L-methionine + phosphate + diphosphate. Its pathway is amino-acid biosynthesis; S-adenosyl-L-methionine biosynthesis; S-adenosyl-L-methionine from L-methionine: step 1/1. In terms of biological role, catalyzes the formation of S-adenosylmethionine (AdoMet) from methionine and ATP. The overall synthetic reaction is composed of two sequential steps, AdoMet formation and the subsequent tripolyphosphate hydrolysis which occurs prior to release of AdoMet from the enzyme. In Lactiplantibacillus plantarum (strain ATCC BAA-793 / NCIMB 8826 / WCFS1) (Lactobacillus plantarum), this protein is S-adenosylmethionine synthase.